A 202-amino-acid chain; its full sequence is Large ribosomal subunit protein bL25 (202 aa).

This sequence belongs to the bacterial ribosomal protein bL25 family. CTC subfamily. As to quaternary structure, part of the 50S ribosomal subunit; part of the 5S rRNA/L5/L18/L25 subcomplex. Contacts the 5S rRNA. Binds to the 5S rRNA independently of L5 and L18.

This is one of the proteins that binds to the 5S RNA in the ribosome where it forms part of the central protuberance. The chain is Large ribosomal subunit protein bL25 from Nitrosomonas eutropha (strain DSM 101675 / C91 / Nm57).